The sequence spans 431 residues: Hemagglutinin-esterase (431 aa).

Positions 1–21 (MARTDAMAPRTLLLVLSLGYA) are cleaved as a signal peptide. The interval 11-131 (TLLLVLSLGY…DNNRWMGNKA (121 aa)) is esterase domain 1. The Virion surface portion of the chain corresponds to 22–399 (FGFNEPLNVV…PVCMYDPLPV (378 aa)). The active-site Nucleophile is serine 44. A disulfide bridge connects residues cysteine 48 and cysteine 69. 8 N-linked (GlcNAc...) asparagine; by host glycosylation sites follow: asparagine 53, asparagine 93, asparagine 151, asparagine 157, asparagine 199, asparagine 244, asparagine 248, and asparagine 309. Residues cysteine 117 and cysteine 166 are joined by a disulfide bond. Positions 132 to 274 (RFYTQLYQKM…GNYISISNEL (143 aa)) are receptor binding. 2 disulfide bridges follow: cysteine 205-cysteine 284 and cysteine 213-cysteine 257. The tract at residues 275-387 (LLTVPSKAIC…HCPTAANIVF (113 aa)) is esterase domain 2. The cysteines at positions 315 and 320 are disulfide-linked. N-linked (GlcNAc...) asparagine; by host glycosylation occurs at asparagine 324. Residues aspartate 334 and histidine 337 each act as charge relay system in the active site. Residues asparagine 352 and asparagine 366 are each glycosylated (N-linked (GlcNAc...) asparagine; by host). An intrachain disulfide couples cysteine 355 to cysteine 379. A helical transmembrane segment spans residues 400–420 (ILLGVLLGIAVLIIVFLMFYF). At 421 to 431 (MTDSGVRLHEA) the chain is on the intravirion side.

Belongs to the influenza type C/coronaviruses hemagglutinin-esterase family. As to quaternary structure, homodimer; disulfide-linked. Forms a complex with the M protein in the pre-Golgi. Associates then with S-M complex to form a ternary complex S-M-HE. N-glycosylated in the host RER.

The protein localises to the virion membrane. It is found in the host cell membrane. The enzyme catalyses N-acetyl-9-O-acetylneuraminate + H2O = N-acetylneuraminate + acetate + H(+). It carries out the reaction N-acetyl-4-O-acetylneuraminate + H2O = N-acetylneuraminate + acetate + H(+). Structural protein that makes short spikes at the surface of the virus. Contains receptor binding and receptor-destroying activities. Mediates de-O-acetylation of N-acetyl-4-O-acetylneuraminic acid, which is probably the receptor determinant recognized by the virus on the surface of erythrocytes and susceptible cells. This receptor-destroying activity is important for virus release as it probably helps preventing self-aggregation and ensures the efficient spread of the progeny virus from cell to cell. May serve as a secondary viral attachment protein for initiating infection, the spike protein being the major one. May become a target for both the humoral and the cellular branches of the immune system. The chain is Hemagglutinin-esterase from Murine coronavirus (strain DVIM) (MHV-DVIM).